The primary structure comprises 368 residues: Glutamate 5-kinase (368 aa).

Residue Lys-13 coordinates ATP. Residues Ser-54, Asp-141, and Asn-153 each contribute to the substrate site. 173–174 (SD) is an ATP binding site. The PUA domain occupies 278–355 (RGEITVDAGA…AEIEAVLGYP (78 aa)).

It belongs to the glutamate 5-kinase family.

Its subcellular location is the cytoplasm. It catalyses the reaction L-glutamate + ATP = L-glutamyl 5-phosphate + ADP. Its pathway is amino-acid biosynthesis; L-proline biosynthesis; L-glutamate 5-semialdehyde from L-glutamate: step 1/2. Its function is as follows. Catalyzes the transfer of a phosphate group to glutamate to form L-glutamate 5-phosphate. This Dinoroseobacter shibae (strain DSM 16493 / NCIMB 14021 / DFL 12) protein is Glutamate 5-kinase.